The sequence spans 237 residues: Intracellular ribonuclease LX (237 aa).

The propeptide occupies 1 to 24 (MMKSQKKLLIKIIVVQCLLVLCVT). Position 36 (Q36) interacts with RNA. An intrachain disulfide couples C42 to C48. RNA-binding positions include H63, F113, 116–117 (HE), and 120–121 (KH). Residue H63 is the Proton donor of the active site. 3 disulfide bridges follow: C78/C124, C183/C219, and C199/C210. Residue E117 is part of the active site. H121 functions as the Proton acceptor in the catalytic mechanism.

It belongs to the RNase T2 family.

The protein localises to the cytoplasm. The catalysed reaction is a ribonucleotidyl-ribonucleotide-RNA + H2O = a 3'-end 3'-phospho-ribonucleotide-RNA + a 5'-end dephospho-ribonucleoside-RNA + H(+). This chain is Intracellular ribonuclease LX (RNALX), found in Solanum lycopersicum (Tomato).